We begin with the raw amino-acid sequence, 130 residues long: Small ribosomal subunit protein uS8 (130 aa).

It belongs to the universal ribosomal protein uS8 family. As to quaternary structure, part of the 30S ribosomal subunit. Contacts proteins S5 and S12.

One of the primary rRNA binding proteins, it binds directly to 16S rRNA central domain where it helps coordinate assembly of the platform of the 30S subunit. The chain is Small ribosomal subunit protein uS8 from Klebsiella pneumoniae (strain 342).